Consider the following 397-residue polypeptide: Acetate kinase 2 (397 aa).

Asparagine 10 lines the Mg(2+) pocket. ATP is bound at residue lysine 17. A substrate-binding site is contributed by arginine 90. Residue aspartate 147 is the Proton donor/acceptor of the active site. Residues 207–211 (HLGNG), 281–283 (DAR), and 329–333 (GIGEN) each bind ATP. Residue glutamate 385 participates in Mg(2+) binding.

This sequence belongs to the acetokinase family. As to quaternary structure, homodimer. It depends on Mg(2+) as a cofactor. Mn(2+) serves as cofactor.

Its subcellular location is the cytoplasm. It carries out the reaction acetate + ATP = acetyl phosphate + ADP. Its pathway is metabolic intermediate biosynthesis; acetyl-CoA biosynthesis; acetyl-CoA from acetate: step 1/2. In terms of biological role, catalyzes the formation of acetyl phosphate from acetate and ATP. Can also catalyze the reverse reaction. In Vibrio vulnificus (strain CMCP6), this protein is Acetate kinase 2.